A 384-amino-acid chain; its full sequence is Dual specificity protein phosphatase 5 (384 aa).

The Rhodanese domain maps to 19–141 (AAARCVVLDC…FYSEYPECCV (123 aa)). Positions 53–74 (RRARGGAVSARYVLPDEAARAR) match the Nuclear localization signal motif. In terms of domain architecture, Tyrosine-protein phosphatase spans 178–319 (GPVEILPFLY…LLQYESEILP (142 aa)). Cysteine 263 serves as the catalytic Phosphocysteine intermediate.

It belongs to the protein-tyrosine phosphatase family. Non-receptor class dual specificity subfamily.

The protein localises to the nucleus. It catalyses the reaction O-phospho-L-tyrosyl-[protein] + H2O = L-tyrosyl-[protein] + phosphate. It carries out the reaction O-phospho-L-seryl-[protein] + H2O = L-seryl-[protein] + phosphate. The catalysed reaction is O-phospho-L-threonyl-[protein] + H2O = L-threonyl-[protein] + phosphate. Dual specificity protein phosphatase; active with phosphotyrosine, phosphoserine and phosphothreonine residues. The highest relative activity is toward ERK1. This is Dual specificity protein phosphatase 5 (DUSP5) from Homo sapiens (Human).